The following is a 195-amino-acid chain: MNPVYSPGSSGVPYANAKGIGYPAGFPMGYAAAAPAYSPNMYAGPNPAFQPGYTPGTPYKVSCSPTSGTVPPYSSSPNPYQTAVYPVRSAYPQQNPYAQQGAYYTQPLYAAPPHVIHHTTVVQPNGMPATMYPAPIPQPRGNGVAMGMVAGTTMAMSAGTLLTSHYPTPVAPHQVTMPTYRPPGTPTYSYVPPQW.

Residues 1-18 lie on the Cytoplasmic side of the membrane; that stretch reads MNPVYSPGSSGVPYANAK. A helical transmembrane segment spans residues 19–43; the sequence is GIGYPAGFPMGYAAAAPAYSPNMYA. Topologically, residues 44 to 143 are extracellular; it reads GPNPAFQPGY…APIPQPRGNG (100 aa). A helical transmembrane segment spans residues 144–162; sequence VAMGMVAGTTMAMSAGTLL. At 163 to 195 the chain is on the cytoplasmic side; the sequence is TSHYPTPVAPHQVTMPTYRPPGTPTYSYVPPQW.

Belongs to the FAM168 family.

Its subcellular location is the cytoplasm. It is found in the perinuclear region. It localises to the cell membrane. The protein localises to the cell projection. The protein resides in the axon. In terms of biological role, inhibitor of neuronal axonal outgrowth. The protein is Myelin-associated neurite-outgrowth inhibitor (fam168b) of Xenopus tropicalis (Western clawed frog).